The primary structure comprises 493 residues: Glycogen synthase 1 (493 aa).

Position 15 (Lys15) interacts with ADP-alpha-D-glucose.

It belongs to the glycosyltransferase 1 family. Bacterial/plant glycogen synthase subfamily.

It carries out the reaction [(1-&gt;4)-alpha-D-glucosyl](n) + ADP-alpha-D-glucose = [(1-&gt;4)-alpha-D-glucosyl](n+1) + ADP + H(+). It participates in glycan biosynthesis; glycogen biosynthesis. Synthesizes alpha-1,4-glucan chains using ADP-glucose. In Methylococcus capsulatus (strain ATCC 33009 / NCIMB 11132 / Bath), this protein is Glycogen synthase 1.